The sequence spans 1698 residues: Bromodomain adjacent to zinc finger domain protein 2A (1698 aa).

Disordered stretches follow at residues 240–262 (QSTP…QLPS) and 352–387 (VMQE…MTIE). Over residues 377–387 (ENVSQDEMTIE) the composition is skewed to polar residues. One can recognise an MBD domain in the interval 418–489 (IATPEQVCFP…EHFSFSPRMP (72 aa)). Disordered regions lie at residues 524 to 550 (RGRP…PPKV) and 610 to 653 (EKEE…DRKL). Over residues 528-540 (RNLEKAKAKEQKA) the composition is skewed to basic and acidic residues. Positions 541 to 553 (KRGRGRPPKVKMI) form a DNA-binding region, a.T hook 1. Residues 579–638 (VQLCKLKKKMRRKARNQEAKLEAAKKLKEIKEKEEKKQKIQKAKNQEKAKNQEKKRTRRQ) adopt a coiled-coil conformation. Over residues 610 to 632 (EKEEKKQKIQKAKNQEKAKNQEK) the composition is skewed to basic and acidic residues. Residues 701-766 (SCAFSDCLTT…LQAAMINPGL (66 aa)) enclose the DDT domain. Disordered stretches follow at residues 884–905 (ITTT…NDEL), 1013–1063 (SFGS…PLTN), 1088–1110 (TVLT…SEAT), and 1123–1149 (TPCR…TAAT). The span at 890 to 900 (SLRRRSERNAE) shows a compositional bias: basic and acidic residues. Composition is skewed to polar residues over residues 1023–1040 (HPRN…SCHC) and 1051–1063 (VTDQ…PLTN). Over residues 1091 to 1108 (TPESSPPHSESTPIISSE) the composition is skewed to low complexity. The span at 1124 to 1149 (PCRNHNQGLSTHSSNRLSPPSPTAAT) shows a compositional bias: polar residues. Positions 1204 to 1216 (EKRRGRRPSKLLK) form a DNA-binding region, a.T hook 3. The PHD-type zinc-finger motif lies at 1476 to 1526 (KVTCLYCRKGDNDELLLLCDSCDRGCHTYCHRPRMNEIPEGDWFCPTCISL). The segment at 1549 to 1587 (FTEDSPSKPSRRREHPTASQFSPGESPASKKRRMGTRSQ) is disordered. In terms of domain architecture, Bromo spans 1585–1689 (RSQSPDLTFC…KFYDARWEEF (105 aa)).

This sequence belongs to the WAL family. In terms of assembly, component of the NoRC complex, at least composed of SMARCA5/SNF2H and BAZ2A/TIP5.

The protein localises to the nucleus. It localises to the nucleolus. In terms of biological role, essential component of the NoRC (nucleolar remodeling complex) complex, a complex that mediates silencing of a fraction of rDNA by recruiting histone-modifying enzymes and DNA methyltransferases, leading to heterochromatin formation and transcriptional silencing. In the complex, it plays a central role by being recruited to rDNA and by targeting chromatin modifying enzymes such as HDAC1, leading to repress RNA polymerase I transcription. Recruited to rDNA via its interaction with TTF1 and its ability to recognize and bind histone H4 acetylated on 'Lys-16' (H4K16ac), leading to deacetylation of H4K5ac, H4K8ac, H4K12ac but not H4K16ac. Specifically binds pRNAs, 150-250 nucleotide RNAs that are complementary in sequence to the rDNA promoter; pRNA-binding is required for heterochromatin formation and rDNA silencing. In Xenopus laevis (African clawed frog), this protein is Bromodomain adjacent to zinc finger domain protein 2A (baz2a).